The sequence spans 535 residues: Intercellular adhesion molecule 1 (535 aa).

Positions 1–27 (MALGAAPAAQLALLALLGTLLPGPGGA) are cleaved as a signal peptide. At 28 to 480 (GISIHPSKAI…LNVLHGQNIL (453 aa)) the chain is on the extracellular side. The Ig-like C2-type 1 domain maps to 41–102 (GDSLTVNCSN…SNCHKEQTIA (62 aa)). N47 carries an N-linked (GlcNAc...) asparagine glycan. Intrachain disulfides connect C48–C91 and C52–C95. N-linked (GlcNAc...) asparagine glycans are attached at residues N105 and N131. The region spanning 127–193 (GEELNLSCLV…FSCRWELDLR (67 aa)) is the Ig-like C2-type 2 domain. C134 and C186 are joined by a disulfide. The Cell attachment site; atypical signature appears at 151-153 (RGE). N-linked (GlcNAc...) asparagine glycans are attached at residues N183, N202, N236, N262, N302, N341, N357, N366, N404, and N428. Residues 230 to 295 (GSRWPVNCTL…LKCSVTLGEV (66 aa)) enclose the Ig-like C2-type 3 domain. C237 and C288 are joined by a disulfide. The 54-residue stretch at 323–376 (WTTVTVECVTRDGAVVKLNGTSAVPPGPRAQLKLNASASDHRSNFSCSAALEIA) folds into the Ig-like C2-type 4 domain. 4 cysteine pairs are disulfide-bonded: C330–C369, C401–C417, C417–C456, and C429–C456. The 54-residue stretch at 410 to 463 (GSEQTLKCEAQGNPIPKLNCSRKGDGASLPIGDLRPVRREVAGTYLCRATSARG) folds into the Ig-like C2-type 5 domain. The chain crosses the membrane as a helical span at residues 481-503 (DIVIPVVAVTLILGALGTAGYVY). The Cytoplasmic segment spans residues 504 to 535 (NYQRKIQKYELQKARKAQEEAALKLNAQSTPP). T533 is subject to Phosphothreonine.

This sequence belongs to the immunoglobulin superfamily. ICAM family. As to quaternary structure, homodimer. Interacts with MUC1 and promotes cell aggregation in epithelial cells. Interacts with ARHGEF26/SGEF. Interacts (on T cell side) with CD81, CD247 and CD9 at immunological synapses between antigen-presenting cells and T cells. Monoubiquitinated, which is promoted by MARCH9 and leads to endocytosis.

Its subcellular location is the membrane. ICAM proteins are ligands for the leukocyte adhesion protein LFA-1 (integrin alpha-L/beta-2). During leukocyte trans-endothelial migration, ICAM1 engagement promotes the assembly of endothelial apical cups through ARHGEF26/SGEF and RHOG activation. The polypeptide is Intercellular adhesion molecule 1 (ICAM1) (Bos taurus (Bovine)).